A 245-amino-acid polypeptide reads, in one-letter code: 7-cyano-7-deazaguanine synthase (245 aa).

19 to 29 (FSGGQDSATCL) lines the ATP pocket. Zn(2+) contacts are provided by Cys207, Cys222, Cys225, and Cys228.

This sequence belongs to the QueC family. It depends on Zn(2+) as a cofactor.

The enzyme catalyses 7-carboxy-7-deazaguanine + NH4(+) + ATP = 7-cyano-7-deazaguanine + ADP + phosphate + H2O + H(+). It participates in purine metabolism; 7-cyano-7-deazaguanine biosynthesis. Its function is as follows. Catalyzes the ATP-dependent conversion of 7-carboxy-7-deazaguanine (CDG) to 7-cyano-7-deazaguanine (preQ(0)). The chain is 7-cyano-7-deazaguanine synthase from Gluconacetobacter diazotrophicus (strain ATCC 49037 / DSM 5601 / CCUG 37298 / CIP 103539 / LMG 7603 / PAl5).